The following is a 660-amino-acid chain: Acetyl-coenzyme A synthetase (660 aa).

CoA is bound by residues 197–200 (RGGK) and Thr-317. Residues 397 to 399 (GEP), 421 to 426 (DTFWQT), Asp-512, and Arg-528 each bind ATP. Ser-536 lines the CoA pocket. Arg-539 is an ATP binding site. Residues Val-550 and Val-555 each contribute to the Mg(2+) site. An N6-acetyllysine modification is found at Lys-625.

Belongs to the ATP-dependent AMP-binding enzyme family. It depends on Mg(2+) as a cofactor. Post-translationally, acetylated. Deacetylation by the SIR2-homolog deacetylase activates the enzyme.

It carries out the reaction acetate + ATP + CoA = acetyl-CoA + AMP + diphosphate. Its function is as follows. Catalyzes the conversion of acetate into acetyl-CoA (AcCoA), an essential intermediate at the junction of anabolic and catabolic pathways. AcsA undergoes a two-step reaction. In the first half reaction, AcsA combines acetate with ATP to form acetyl-adenylate (AcAMP) intermediate. In the second half reaction, it can then transfer the acetyl group from AcAMP to the sulfhydryl group of CoA, forming the product AcCoA. In Herminiimonas arsenicoxydans, this protein is Acetyl-coenzyme A synthetase.